Here is a 243-residue protein sequence, read N- to C-terminus: 1-(5-phosphoribosyl)-5-[(5-phosphoribosylamino)methylideneamino] imidazole-4-carboxamide isomerase (243 aa).

The active-site Proton acceptor is aspartate 8. Catalysis depends on aspartate 130, which acts as the Proton donor.

This sequence belongs to the HisA/HisF family.

The protein localises to the cytoplasm. It carries out the reaction 1-(5-phospho-beta-D-ribosyl)-5-[(5-phospho-beta-D-ribosylamino)methylideneamino]imidazole-4-carboxamide = 5-[(5-phospho-1-deoxy-D-ribulos-1-ylimino)methylamino]-1-(5-phospho-beta-D-ribosyl)imidazole-4-carboxamide. It functions in the pathway amino-acid biosynthesis; L-histidine biosynthesis; L-histidine from 5-phospho-alpha-D-ribose 1-diphosphate: step 4/9. The chain is 1-(5-phosphoribosyl)-5-[(5-phosphoribosylamino)methylideneamino] imidazole-4-carboxamide isomerase from Saccharophagus degradans (strain 2-40 / ATCC 43961 / DSM 17024).